Consider the following 267-residue polypeptide: Translation initiation factor 2 subunit alpha (267 aa).

One can recognise an S1 motif domain in the interval 12-83; the sequence is GEIVMATVER…KRKYANLSLR (72 aa).

The protein belongs to the eIF-2-alpha family. As to quaternary structure, heterotrimer composed of an alpha, a beta and a gamma chain.

Its function is as follows. eIF-2 functions in the early steps of protein synthesis by forming a ternary complex with GTP and initiator tRNA. The chain is Translation initiation factor 2 subunit alpha from Methanopyrus kandleri (strain AV19 / DSM 6324 / JCM 9639 / NBRC 100938).